Reading from the N-terminus, the 314-residue chain is Thymidylate synthase (314 aa).

DUMP is bound by residues R21 and 176–177; that span reads RR. C196 (nucleophile) is an active-site residue. Residues 216–219, N227, and 257–259 each bind dUMP; these read RSAD and HLY. D219 is a binding site for (6R)-5,10-methylene-5,6,7,8-tetrahydrofolate. Position 313 (S313) interacts with (6R)-5,10-methylene-5,6,7,8-tetrahydrofolate.

Belongs to the thymidylate synthase family. Bacterial-type ThyA subfamily. Homodimer.

The protein localises to the cytoplasm. It catalyses the reaction dUMP + (6R)-5,10-methylene-5,6,7,8-tetrahydrofolate = 7,8-dihydrofolate + dTMP. It participates in pyrimidine metabolism; dTTP biosynthesis. In terms of biological role, catalyzes the reductive methylation of 2'-deoxyuridine-5'-monophosphate (dUMP) to 2'-deoxythymidine-5'-monophosphate (dTMP) while utilizing 5,10-methylenetetrahydrofolate (mTHF) as the methyl donor and reductant in the reaction, yielding dihydrofolate (DHF) as a by-product. This enzymatic reaction provides an intracellular de novo source of dTMP, an essential precursor for DNA biosynthesis. This chain is Thymidylate synthase, found in Listeria monocytogenes serotype 4b (strain CLIP80459).